Here is a 132-residue protein sequence, read N- to C-terminus: Small ribosomal subunit protein uS19 (132 aa).

It belongs to the universal ribosomal protein uS19 family.

Its function is as follows. Protein S19 forms a complex with S13 that binds strongly to the 16S ribosomal RNA. The chain is Small ribosomal subunit protein uS19 (rps19) from Pyrococcus horikoshii (strain ATCC 700860 / DSM 12428 / JCM 9974 / NBRC 100139 / OT-3).